Consider the following 123-residue polypeptide: Fluoride-specific ion channel FluC (123 aa).

Helical transmembrane passes span 5 to 25, 29 to 49, 65 to 85, and 94 to 114; these read LIIG…SGII, FGIP…VGFV, LIIT…YETF, and IKFL…IYVG. 2 residues coordinate Na(+): Gly72 and Thr75.

It belongs to the fluoride channel Fluc/FEX (TC 1.A.43) family.

It localises to the cell membrane. It catalyses the reaction fluoride(in) = fluoride(out). Its activity is regulated as follows. Na(+) is not transported, but it plays an essential structural role and its presence is essential for fluoride channel function. Fluoride-specific ion channel. Important for reducing fluoride concentration in the cell, thus reducing its toxicity. The polypeptide is Fluoride-specific ion channel FluC (Methanococcus aeolicus (strain ATCC BAA-1280 / DSM 17508 / OCM 812 / Nankai-3)).